Here is a 1138-residue protein sequence, read N- to C-terminus: Pesticidal crystal protein Cry7Ab (1138 aa).

Belongs to the delta endotoxin family.

In terms of biological role, promotes colloidosmotic lysis by binding to the midgut epithelial cells of Coleoptera. The protein is Pesticidal crystal protein Cry7Ab (cry7Ab) of Bacillus thuringiensis serovar kumamotoensis.